The primary structure comprises 192 residues: Phosphoheptose isomerase (192 aa).

Positions 37–192 (ITDSFKNGGK…MMLIEFEMAK (156 aa)) constitute an SIS domain. 52–54 (NGG) contributes to the substrate binding site. Residues His-61 and Glu-65 each contribute to the Zn(2+) site. Residues Glu-65, 93 to 94 (ND), 119 to 121 (STS), Ser-124, and Gln-172 each bind substrate. Zn(2+)-binding residues include Gln-172 and His-180.

This sequence belongs to the SIS family. GmhA subfamily. As to quaternary structure, homotetramer. Zn(2+) is required as a cofactor.

It localises to the cytoplasm. It carries out the reaction 2 D-sedoheptulose 7-phosphate = D-glycero-alpha-D-manno-heptose 7-phosphate + D-glycero-beta-D-manno-heptose 7-phosphate. Its pathway is carbohydrate biosynthesis; D-glycero-D-manno-heptose 7-phosphate biosynthesis; D-glycero-alpha-D-manno-heptose 7-phosphate and D-glycero-beta-D-manno-heptose 7-phosphate from sedoheptulose 7-phosphate: step 1/1. Catalyzes the isomerization of sedoheptulose 7-phosphate in D-glycero-D-manno-heptose 7-phosphate. This chain is Phosphoheptose isomerase, found in Glaesserella parasuis serovar 5 (strain SH0165) (Haemophilus parasuis).